The following is a 360-amino-acid chain: Heme A synthase (360 aa).

Helical transmembrane passes span 29 to 49 (WLFL…ATRL), 111 to 131 (FLGR…WWTG), 139 to 159 (LGLV…WIMV), 175 to 195 (LAAH…LAAG), 210 to 230 (LTAL…GLVA), 269 to 289 (VALV…LALL), 309 to 329 (ALAG…LLAV), and 330 to 350 (PLWA…MAVA). H276 is a binding site for heme. Residue H337 coordinates heme.

Belongs to the COX15/CtaA family. Type 2 subfamily. Interacts with CtaB. The cofactor is heme b.

Its subcellular location is the cell membrane. The catalysed reaction is Fe(II)-heme o + 2 A + H2O = Fe(II)-heme a + 2 AH2. The protein operates within porphyrin-containing compound metabolism; heme A biosynthesis; heme A from heme O: step 1/1. In terms of biological role, catalyzes the conversion of heme O to heme A by two successive hydroxylations of the methyl group at C8. The first hydroxylation forms heme I, the second hydroxylation results in an unstable dihydroxymethyl group, which spontaneously dehydrates, resulting in the formyl group of heme A. This is Heme A synthase from Methylobacterium sp. (strain 4-46).